Here is a 228-residue protein sequence, read N- to C-terminus: ATP synthase F(0) complex subunit a (228 aa).

6 helical membrane passes run 13–33 (YFLGFPLMIFIAILISLTMFI), 70–90 (WALLLMTTLMFIFLNNITGLL), 100–120 (LSLNMAMAIPLWLGTIIMGAT), 140–160 (APFLIVIESISIIIRPLALGV), 162–182 (LTANITAGHLLIHLVSLALIN), and 190–210 (LFLTFSVFILLLILELAVSFI).

The protein belongs to the ATPase A chain family. In terms of assembly, component of the ATP synthase complex composed at least of ATP5F1A/subunit alpha, ATP5F1B/subunit beta, ATP5MC1/subunit c (homooctomer), MT-ATP6/subunit a, MT-ATP8/subunit 8, ATP5ME/subunit e, ATP5MF/subunit f, ATP5MG/subunit g, ATP5MK/subunit k, ATP5MJ/subunit j, ATP5F1C/subunit gamma, ATP5F1D/subunit delta, ATP5F1E/subunit epsilon, ATP5PF/subunit F6, ATP5PB/subunit b, ATP5PD/subunit d, ATP5PO/subunit OSCP. ATP synthase complex consists of a soluble F(1) head domain (subunits alpha(3) and beta(3)) - the catalytic core - and a membrane F(0) domain - the membrane proton channel (subunits c, a, 8, e, f, g, k and j). These two domains are linked by a central stalk (subunits gamma, delta, and epsilon) rotating inside the F1 region and a stationary peripheral stalk (subunits F6, b, d, and OSCP). Interacts with DNAJC30; interaction is direct.

The protein resides in the mitochondrion inner membrane. The enzyme catalyses H(+)(in) = H(+)(out). Functionally, subunit a, of the mitochondrial membrane ATP synthase complex (F(1)F(0) ATP synthase or Complex V) that produces ATP from ADP in the presence of a proton gradient across the membrane which is generated by electron transport complexes of the respiratory chain. ATP synthase complex consist of a soluble F(1) head domain - the catalytic core - and a membrane F(1) domain - the membrane proton channel. These two domains are linked by a central stalk rotating inside the F(1) region and a stationary peripheral stalk. During catalysis, ATP synthesis in the catalytic domain of F(1) is coupled via a rotary mechanism of the central stalk subunits to proton translocation. With the subunit c (ATP5MC1), forms the proton-conducting channel in the F(0) domain, that contains two crucial half-channels (inlet and outlet) that facilitate proton movement from the mitochondrial intermembrane space (IMS) into the matrix. Protons are taken up via the inlet half-channel and released through the outlet half-channel, following a Grotthuss mechanism. The protein is ATP synthase F(0) complex subunit a of Myxine glutinosa (Atlantic hagfish).